Here is a 445-residue protein sequence, read N- to C-terminus: Phosphoglucosamine mutase (445 aa).

Residue Ser-102 is the Phosphoserine intermediate of the active site. The Mg(2+) site is built by Ser-102, Asp-241, Asp-243, and Asp-245. Ser-102 carries the phosphoserine modification.

Belongs to the phosphohexose mutase family. The cofactor is Mg(2+). Activated by phosphorylation.

It catalyses the reaction alpha-D-glucosamine 1-phosphate = D-glucosamine 6-phosphate. Functionally, catalyzes the conversion of glucosamine-6-phosphate to glucosamine-1-phosphate. The polypeptide is Phosphoglucosamine mutase (Escherichia coli O127:H6 (strain E2348/69 / EPEC)).